Here is a 1665-residue protein sequence, read N- to C-terminus: Protein scribble homolog (1665 aa).

Positions 1–804 (MLKCIPLWRC…MRVWRERMVE (804 aa)) are sufficient for targeting to adherens junction and to inhibit cell proliferation. Ser-37 carries the phosphoserine modification. 16 LRR repeats span residues 37-58 (SLEE…FFRL), 60-81 (NLRK…VANF), 83-104 (QLVE…IKFC), 106-127 (ALEI…FTQL), 129-150 (SLAH…VGNL), 152-174 (NLVT…SFLV), 175-197 (KLEQ…GALP), 198-219 (NLRE…LGNL), 221-243 (RLVC…GGLA), 244-265 (LLTD…IGQL), 267-288 (QLSI…IGDC), 290-312 (NLSE…GKLT), 313-334 (KLTN…IGGC), 336-357 (ALSV…LAHT), 359-381 (ELHV…THLN), and 382-402 (LKAL…QTED). A Phosphothreonine modification is found at Thr-378. Disordered stretches follow at residues 422–615 (PSLE…HFKI) and 635–689 (REGP…SAPS). Residues 428-437 (GQQSSPSESC) are compositionally biased toward polar residues. The span at 452 to 463 (DTLEGEEDAEEA) shows a compositional bias: acidic residues. Residues 455–475 (EGEEDAEEAAAEKRGLQRRAT) adopt a coiled-coil conformation. A Phosphothreonine modification is found at Thr-475. Composition is skewed to basic and acidic residues over residues 479 to 494 (SELK…RRNE) and 570 to 580 (FAEDTLIPRED). Residue Ser-583 is modified to Phosphoserine. The stretch at 653–687 (RAHEEEEEEEEENRDEEEGEATTEEDDKEEAVASA) forms a coiled coil. Positions 657–681 (EEEEEEEENRDEEEGEATTEEDDKE) are enriched in acidic residues. Thr-674 and Thr-675 each carry phosphothreonine. Phosphoserine is present on residues Ser-694 and Ser-750. Positions 703–1215 (IEPARIEEEE…SLESISSIDR (513 aa)) are interaction with ARHGEF7. The PDZ 1 domain maps to 714 to 801 (TLTIVRQTGG…AVQMRVWRER (88 aa)). The segment at 714-1180 (TLTIVRQTGG…TVLVCDGFDT (467 aa)) is required for interaction with VIM. Phosphothreonine is present on Thr-812. 3 positions are modified to phosphoserine: Ser-821, Ser-861, and Ser-925. PDZ domains are found at residues 848–936 (AACL…ERET), 990–1079 (EICL…RRDP), and 1086–1180 (ELCI…GFDT). Ser-1126, Ser-1206, Ser-1209, Ser-1212, Ser-1218, Ser-1262, Ser-1265, and Ser-1284 each carry phosphoserine. Basic and acidic residues predominate over residues 1213–1228 (IDRELSPEGPGKEKEL). The tract at residues 1213 to 1246 (IDRELSPEGPGKEKELASQALPWESESAETTGRN) is disordered. Disordered stretches follow at residues 1263–1325 (AGSL…DELP) and 1341–1501 (VHPP…AERR). Polar residues predominate over residues 1264-1277 (GSLQRGPSATTGGK). Lys-1291 is modified (omega-N-methylarginine). Ala-1299 carries the phosphoserine modification. Position 1312 is an omega-N-methylarginine (Arg-1312). Ser-1320 carries the post-translational modification Phosphoserine. Residue Thr-1353 is modified to Phosphothreonine. At Ser-1359 the chain carries Phosphoserine. Residues 1364–1376 (SFRERQKYFELEV) are compositionally biased toward basic and acidic residues. Ser-1389 bears the Phosphoserine mark. A coiled-coil region spans residues 1390 to 1421 (LVGADDLRKMQEEEARKLQQKRAQMLREEAVT). Over residues 1394-1406 (DDLRKMQEEEARK) the composition is skewed to basic and acidic residues. Ser-1455 and Ser-1458 each carry phosphoserine. Residues 1471-1482 (AKAERRHQERLR) are compositionally biased toward basic and acidic residues. A phosphoserine mark is found at Ser-1485, Ser-1496, and Ser-1518. Residues 1530–1577 (LSKSQEGRGKRGPLERLAEAPSPAPTPSPTPLEDFGLQTSASPGRLPL) form a disordered region. Residues 1534–1547 (QEGRGKRGPLERLA) are compositionally biased toward basic and acidic residues. At Ser-1551 the chain carries Phosphoserine. Thr-1555 is subject to Phosphothreonine. Ser-1557, Ser-1571, and Ser-1601 each carry phosphoserine. The interval 1632–1665 (GRPSPGAVGPEDMTLCSSRRSVRPGRRGLGPVPS) is disordered.

The protein belongs to the LAP (LRR and PDZ) protein family. As to quaternary structure, interacts with UBE3A. Interacts with PAK1 and PAK2. Interacts (via PDZ domains) with VANGL2. Interacts (via PDZ domains) with LPP and TRIP6; the interaction is direct. Interacts (via PDZ domains) with TJP2. Interacts (via PDZ domains) with APC; may mediate APC targeting to adherens junctions of epithelial cells. Interacts (via PDZ domains) with TSHR; regulates TSHR trafficking and function. Interacts with ARHGEF7 and GIT1; interacts directly with ARHGEF7. Interacts with CTNNB1. Interacts with MAPK12. Interacts (via PDZ domains 1 and 3) with MCC. Interacts with DLG5. Interacts with STK4/MST1 and LATS1 in the presence of DLG5. Interacts (via PDZ domain 3) with CRTAM (via PDZ-binding motif); the interaction promotes CRTAM and SCRIB polarization in a subset of CD4+ T-cells. Interacts with YES1, when YES1 is in a closed conformation; the interaction facilitates YES1 autophosphorylation. Interacts (via PDZ domains) with VIM; the interaction protects SCRIB from proteasomal degradation and facilitates SCRIB localization to intermediate filaments, the interaction is reduced by cell contact inhibition. Ubiquitinated; targeted for UBE3A-dependent multiubiquitination and degraded. Post-translationally, palmitoylated. Could be depalmitoylated by LYPLA1 and/or LYPLA2. Palmitoylation of SCRIB by ZDHHC7 is required for its localization to cell-cell junctions, function in the establishement of epithelial cell polarity and the regulation of downstream signaling pathways important for epithelial cell differentiation. As to expression, expressed in CD4+ T-cells (at protein level). Found in a wide range of tissues including liver, kidney and spleen. Also expressed in the brain (at protein level).

It is found in the cell membrane. The protein resides in the cell junction. The protein localises to the adherens junction. It localises to the cell projection. Its subcellular location is the lamellipodium. It is found in the cytoplasm. The protein resides in the postsynapse. The protein localises to the presynapse. Scaffold protein involved in different aspects of polarized cell differentiation regulating epithelial and neuronal morphogenesis and T-cell polarization. Via its interaction with CRTAM, required for the late phase polarization of a subset of CD4+ T-cells, which in turn regulates TCR-mediated proliferation and IFNG and IL22 production. Plays a role in cell directional movement, cell orientation, cell sheet organization and Golgi complex polarization at the cell migration front. Promotes epithelial cell layer barrier function via maintaining cell-cell adhesion. Most probably functions in the establishment of apico-basal cell polarity. May function in cell proliferation regulating progression from G1 to S phase and as a positive regulator of apoptosis for instance during acinar morphogenesis of the mammary epithelium. May regulate cell invasion via MAPK-mediated cell migration and adhesion. May play a role in exocytosis and in the targeting of synaptic vesicles to synapses. Functions as an activator of Rac GTPase activity. This chain is Protein scribble homolog, found in Mus musculus (Mouse).